We begin with the raw amino-acid sequence, 835 residues long: MDASQADRKVAPVSAVVKNAICELSRINDGERLMEVLLSLKCYLGTRENSTQTQEHAEFNRNHYTPFLEFLVAQMGPQWLDLLTLEKLELWDSFFLEGPADQAFLVLMDSLGKTGPSIRLDRCVHVLERFLQRGALAEVIREVCQQQLESNPTAVLHEAILGRISSLPDHLANCLQQHNKPVFYPNNYYPLLAGSIISVLQMVSDALRDGKNCSISFASQVVGKVCMQGRQKELLSVLVPRLKSLVQSDCIWQRICWRLVESVPDRWMEPVVIGIVQMAPGAEFLSQLLGDLVVKNKRTQFLLTKKMLFLQYGLKKDALQSILGYLSLDASRRYLLVKILRELLEVWSSGSVLKNSSQPQLLHVSRCLLICLGLLNKQEIESCKQDLLVSLTSGARNYLDSSVPAIRRMGMVVAECLSHRIDTEGPGLSFQYEEDEDTRDLKALLKPPHVFEADSADCVKNPEESSPSKSCPKAIEKSKMEAKADQASDSELDSDDDLAPYDMSADTELKKSKAPAYIRDCIEVLLSDDVEKLEVTMTCLATLIQANTSATKEVSVELTKILLHIDDKPSVERFTELRHAALVAVAVTDPVPVSQYLTGEFYSLNYSLRQRMDILDVLSSAAQSLSEKLSHEVSSESRSTGTGQHSIRSTTWTLAEAPADWRKVVEERIASKTRRFSKGQSVPTPVPAPNRYHAVAGHLFFPLIQNYDRQIVTFDLLGEDRLVLGRMVHTLGILMHLALHAPIASQMGKALLEFVWVLRFHIDAFVRQGLLFCISTVLLSVPWERLMTDMAEEVMETQSWLADVAERDSDDDCRRLALNGLFLMEKLRNNIHGTP.

2 disordered regions span residues 455–501 (SADC…LAPY) and 629–648 (LSHEVSSESRSTGTGQHSIR). Residues 464–473 (ESSPSKSCPK) show a composition bias toward low complexity. Residues 474–486 (AIEKSKMEAKADQ) show a composition bias toward basic and acidic residues. Residues 488–499 (SDSELDSDDDLA) show a composition bias toward acidic residues. Residues 636 to 648 (ESRSTGTGQHSIR) are compositionally biased toward polar residues.

This sequence belongs to the TEL2 family.

It localises to the cytoplasm. The protein localises to the membrane. Its subcellular location is the nucleus. It is found in the chromosome. The protein resides in the telomere. Regulator of the DNA damage response (DDR). Part of the TTT complex that is required to stabilize protein levels of the phosphatidylinositol 3-kinase-related protein kinase (PIKK) family proteins. Promotes assembly, stabilizes and maintains the activity of TORC complexes, which regulate cell growth and survival in response to nutrient and hormonal signals. May be involved in telomere length regulation. The protein is Telomere length regulation protein TEL2 homolog (telo2) of Xenopus laevis (African clawed frog).